Reading from the N-terminus, the 233-residue chain is Riboflavin kinase (233 aa).

The unknown stretch occupies residues 1 to 99 (MSGATSTGDV…YRRIFEDPGE (99 aa)). Residues 100 to 233 (LALAGTVTSG…DDEVTIRVEA (134 aa)) form a riboflavin kinase region. 109–114 (GMGEGR) contacts CDP. Mg(2+) is bound by residues threonine 138 and asparagine 140. Residues threonine 200 and glutamate 208 each contribute to the FMN site. Residue 213–216 (VKLR) participates in CDP binding.

This sequence belongs to the archaeal riboflavin kinase family. Mg(2+) is required as a cofactor.

The enzyme catalyses riboflavin + CTP = CDP + FMN + H(+). The protein operates within cofactor biosynthesis; FMN biosynthesis; FMN from riboflavin (CTP route): step 1/1. Catalyzes the CTP-dependent phosphorylation of riboflavin (vitamin B2) to form flavin mononucleotide (FMN). The polypeptide is Riboflavin kinase (ribK) (Halobacterium salinarum (strain ATCC 700922 / JCM 11081 / NRC-1) (Halobacterium halobium)).